The chain runs to 303 residues: Glutathione transport system permease protein GsiD (303 aa).

The next 6 membrane-spanning stretches (helical) occupy residues 40-60 (AMTA…ARWI), 105-125 (LAAG…LGLL), 144-164 (LFAF…GSGI), 165-185 (ANVI…LVRG), 222-242 (IVVF…SLSF), and 266-286 (VIAP…VLAF). An ABC transmembrane type-1 domain is found at 101 to 290 (AQISLAAGVF…LTVLAFNLLG (190 aa)).

The protein belongs to the binding-protein-dependent transport system permease family. In terms of assembly, the complex is composed of two ATP-binding proteins (GsiA), two transmembrane proteins (GsiC and GsiD) and a solute-binding protein (GsiB).

Its subcellular location is the cell inner membrane. Functionally, part of the ABC transporter complex GsiABCD involved in glutathione import. Probably responsible for the translocation of the substrate across the membrane. The protein is Glutathione transport system permease protein GsiD of Shigella flexneri serotype 5b (strain 8401).